The chain runs to 591 residues: 4-coumarate--CoA ligase-like 3 (591 aa).

ATP contacts are provided by serine 228, serine 229, glycine 230, threonine 231, serine 232, and lysine 236. Tyrosine 280 contributes to the (E)-4-coumaroyl-AMP binding site. Residue arginine 301 participates in CoA binding. An SBD1 region spans residues 303-375 (DAGDAVAAIG…QAFPHVDFIQ (73 aa)). (E)-4-coumaroyl-AMP contacts are provided by alanine 353, glutamine 375, glycine 376, and threonine 380. 5 residues coordinate ATP: glutamine 375, glycine 376, threonine 380, aspartate 459, and arginine 474. Residues 376 to 440 (GYGMTESTAV…LHGPGIMKGY (65 aa)) form an SBD2 region. 2 residues coordinate (E)-4-coumaroyl-AMP: lysine 476 and lysine 480. Residues lysine 482 and glycine 483 each coordinate CoA. Lysine 565 provides a ligand contact to ATP.

Belongs to the ATP-dependent AMP-binding enzyme family. It depends on Mg(2+) as a cofactor.

The enzyme catalyses (E)-4-coumarate + ATP + CoA = (E)-4-coumaroyl-CoA + AMP + diphosphate. It catalyses the reaction (E)-4-coumarate + ATP + H(+) = (E)-4-coumaroyl-AMP + diphosphate. It carries out the reaction (E)-4-coumaroyl-AMP + CoA = (E)-4-coumaroyl-CoA + AMP + H(+). Functionally, carboxylate--CoA ligase that may use 4-coumarate as substrate. Follows a two-step reaction mechanism, wherein the carboxylate substrate first undergoes adenylation by ATP, followed by a thioesterification in the presence of CoA to yield the final CoA thioester. This chain is 4-coumarate--CoA ligase-like 3 (4CLL3), found in Oryza sativa subsp. japonica (Rice).